The sequence spans 551 residues: Putative hydroxymethylpyrimidine/phosphomethylpyrimidine kinase 2 (551 aa).

Glutamate 76 contributes to the 4-amino-5-hydroxymethyl-2-methylpyrimidine binding site.

The protein in the N-terminal section; belongs to the ThiD family. This sequence in the C-terminal section; belongs to the thiaminase-2 family.

Its subcellular location is the cytoplasm. It catalyses the reaction 4-amino-5-hydroxymethyl-2-methylpyrimidine + ATP = 4-amino-2-methyl-5-(phosphooxymethyl)pyrimidine + ADP + H(+). The enzyme catalyses 4-amino-2-methyl-5-(phosphooxymethyl)pyrimidine + ATP = 4-amino-2-methyl-5-(diphosphooxymethyl)pyrimidine + ADP. The protein operates within cofactor biosynthesis; thiamine diphosphate biosynthesis; 4-amino-2-methyl-5-diphosphomethylpyrimidine from 5-amino-1-(5-phospho-D-ribosyl)imidazole: step 2/3. It functions in the pathway cofactor biosynthesis; thiamine diphosphate biosynthesis; 4-amino-2-methyl-5-diphosphomethylpyrimidine from 5-amino-1-(5-phospho-D-ribosyl)imidazole: step 3/3. Functionally, catalyzes the phosphorylation of hydroxymethylpyrimidine phosphate (HMP-P) to HMP-PP, and of HMP to HMP-P. The sequence is that of Putative hydroxymethylpyrimidine/phosphomethylpyrimidine kinase 2 from Schizosaccharomyces pombe (strain 972 / ATCC 24843) (Fission yeast).